Consider the following 394-residue polypeptide: MKIHEYQAKDILAGFGIAIPRGRVAMNASQVERAARELGGHCVIKAQVYAGGRGKGGGIRVAQDPGQAGEIAKELLGTKLVTPQTGPEGLEVRRLLVEEVVDIERELYLSITLDRESSRYCLIASAEGGMDIEEIARTAPDRIRILTIDPFIGLRSYQARRTALGLGLVGPLCEECVELILNLYRCLLERDCSLVEINPLVVTNAGWLVAMDTKMTFDDNALQRHCEYPDLVDYSQLNPLEIAAARFDLSYIKLSGAIGCMVNGAGLAMATLDVLKEAGGEPANFLDVGGGASREKVAEAFRIILQDRDVRGVFVNIFGGIMRCDIIAQGIIDAASGGGCRLPIVVRMDGNRVEEGKQLLRESGLNIRIGENMGDGAQQIVAMLNREVNQPCQS.

The ATP-grasp domain maps to 9 to 243; it reads KDILAGFGIA…YSQLNPLEIA (235 aa). ATP-binding positions include Lys45, 52–54, Glu98, Val101, and Glu106; that span reads GRG. Mg(2+) is bound by residues Asn198 and Asp212. Substrate contacts are provided by residues Asn263 and 320–322; that span reads GIM.

This sequence belongs to the succinate/malate CoA ligase beta subunit family. As to quaternary structure, heterotetramer of two alpha and two beta subunits. The cofactor is Mg(2+).

It carries out the reaction succinate + ATP + CoA = succinyl-CoA + ADP + phosphate. The enzyme catalyses GTP + succinate + CoA = succinyl-CoA + GDP + phosphate. The protein operates within carbohydrate metabolism; tricarboxylic acid cycle; succinate from succinyl-CoA (ligase route): step 1/1. Succinyl-CoA synthetase functions in the citric acid cycle (TCA), coupling the hydrolysis of succinyl-CoA to the synthesis of either ATP or GTP and thus represents the only step of substrate-level phosphorylation in the TCA. The beta subunit provides nucleotide specificity of the enzyme and binds the substrate succinate, while the binding sites for coenzyme A and phosphate are found in the alpha subunit. In Pelobacter propionicus (strain DSM 2379 / NBRC 103807 / OttBd1), this protein is Succinate--CoA ligase [ADP-forming] subunit beta.